A 353-amino-acid polypeptide reads, in one-letter code: Nicotinate-nucleotide--dimethylbenzimidazole phosphoribosyltransferase (353 aa).

The active-site Proton acceptor is the glutamate 320.

The protein belongs to the CobT family.

It catalyses the reaction 5,6-dimethylbenzimidazole + nicotinate beta-D-ribonucleotide = alpha-ribazole 5'-phosphate + nicotinate + H(+). The protein operates within nucleoside biosynthesis; alpha-ribazole biosynthesis; alpha-ribazole from 5,6-dimethylbenzimidazole: step 1/2. Its function is as follows. Catalyzes the synthesis of alpha-ribazole-5'-phosphate from nicotinate mononucleotide (NAMN) and 5,6-dimethylbenzimidazole (DMB). The sequence is that of Nicotinate-nucleotide--dimethylbenzimidazole phosphoribosyltransferase from Syntrophotalea carbinolica (strain DSM 2380 / NBRC 103641 / GraBd1) (Pelobacter carbinolicus).